A 2234-amino-acid polypeptide reads, in one-letter code: Bridge-like lipid transfer protein family member 2 (2234 aa).

Residues 1–31 form the signal peptide; the sequence is MPLFLSALLVLLLVALSALFLGRWLVVRLAT. The interval 29 to 108 is transmembrane domain; the sequence is LATRWCQRKL…LQKVSSLSAP (80 aa). Serine 563 is modified (phosphoserine). The segment at 1496 to 1529 is disordered; the sequence is QMSAKKPKRGIPPSAQVPPHVSTPSFSGRPDKGS. A coiled-coil region spans residues 1814–1885; it reads ILHLQEAVRQ…LNILIRCFKD (72 aa). 2 positions are modified to phosphoserine: serine 1846 and serine 2090.

The protein belongs to the SABRE family.

It is found in the cell membrane. The protein localises to the endoplasmic reticulum membrane. Its subcellular location is the mitochondrion membrane. Functionally, tube-forming lipid transport protein which binds to phosphatidylinositols and affects phosphatidylinositol-4,5-bisphosphate (PtdIns-4,5-P2) distribution. In Mus musculus (Mouse), this protein is Bridge-like lipid transfer protein family member 2 (Bltp2).